The sequence spans 112 residues: Transmembrane protein 14 homolog (112 aa).

Residues 3 to 23 (VDWFGYVYAATVAAGGIMGYA) form a helical membrane-spanning segment.

This sequence belongs to the TMEM14 family.

The protein resides in the membrane. This is Transmembrane protein 14 homolog from Drosophila melanogaster (Fruit fly).